Reading from the N-terminus, the 553-residue chain is Terpene synthase 16 (553 aa).

Mg(2+) is bound by residues Asp303, Asp307, and Glu457. The DDXXD motif motif lies at 303-307; sequence DDTYD.

This sequence belongs to the terpene synthase family. Tpsa subfamily. Requires Mg(2+) as cofactor. The cofactor is Mn(2+). In terms of tissue distribution, expressed in leaves, trichomes and flowers.

The protein operates within secondary metabolite biosynthesis; terpenoid biosynthesis. Its function is as follows. Sesquiterpene synthase involved in the biosynthesis of volatile compounds. No activity detected with geranyl diphosphate (GPP) and farnesyl diphosphate (FPP) as substrates. The polypeptide is Terpene synthase 16 (Solanum lycopersicum (Tomato)).